The following is a 379-amino-acid chain: NADH-quinone oxidoreductase subunit D 1 (379 aa).

It belongs to the complex I 49 kDa subunit family. In terms of assembly, NDH-1 is composed of 14 different subunits. Subunits NuoB, C, D, E, F, and G constitute the peripheral sector of the complex.

The protein localises to the cell inner membrane. It catalyses the reaction a quinone + NADH + 5 H(+)(in) = a quinol + NAD(+) + 4 H(+)(out). Functionally, NDH-1 shuttles electrons from NADH, via FMN and iron-sulfur (Fe-S) centers, to quinones in the respiratory chain. The immediate electron acceptor for the enzyme in this species is believed to be ubiquinone. Couples the redox reaction to proton translocation (for every two electrons transferred, four hydrogen ions are translocated across the cytoplasmic membrane), and thus conserves the redox energy in a proton gradient. In Anaeromyxobacter sp. (strain K), this protein is NADH-quinone oxidoreductase subunit D 1.